We begin with the raw amino-acid sequence, 353 residues long: Protein CEPU-1 (353 aa).

Residues 1 to 28 (MAQAKMQHPVSWVIFAGMAALLLFQGVP) form the signal peptide. Ig-like C2-type domains are found at residues 37-124 (PKAM…PKTS), 134-216 (PKIT…VKVT), and 220-314 (PPYI…ETTT). N-linked (GlcNAc...) asparagine glycans are attached at residues Asn-42, Asn-68, and Asn-150. The cysteines at positions 55 and 113 are disulfide-linked. Cystine bridges form between Cys-155–Cys-199 and Cys-241–Cys-293. Asn-282, Asn-290, and Asn-303 each carry an N-linked (GlcNAc...) asparagine glycan. Ser-330 carries GPI-anchor amidated serine lipidation. The propeptide at 331-353 (GAWRRGSCAWLLALPLAQLARQF) is removed in mature form.

It belongs to the immunoglobulin superfamily. IgLON family. As to quaternary structure, interacts with NEGR1. In terms of tissue distribution, found on the dendrites, somata and axons of developing Purkinje cells. Undetectable on other neurons like Golgi or granule cells.

It localises to the cell membrane. In terms of biological role, it may be a cellular address molecule specific to Purkinje cells. It may represent a receptor or a subunit of a receptor complex. This Gallus gallus (Chicken) protein is Protein CEPU-1.